Consider the following 446-residue polypeptide: D(1A) dopamine receptor (446 aa).

Topologically, residues 1-22 (MAPNTSTMDETGLPVERDFSFR) are extracellular. Asparagine 4 carries N-linked (GlcNAc...) asparagine glycosylation. Residues 23-48 (ILTACFLSLLILSTLLGNTLVCAAVI) form a helical membrane-spanning segment. The Cytoplasmic segment spans residues 49–59 (RFRHLRSKVTN). The chain crosses the membrane as a helical span at residues 60-86 (FFVISLAVSDLLVAVLVMPWKAVAEIA). Over 87 to 95 (GFWPFGSFC) the chain is Extracellular. Cysteine 95 and cysteine 186 form a disulfide bridge. A helical transmembrane segment spans residues 96–118 (NIWVAFDIMCSTASILNLCVISV). Residues 119–137 (DRYWAISSPFQYERKMTPK) lie on the Cytoplasmic side of the membrane. The chain crosses the membrane as a helical span at residues 138 to 162 (AAFILISVAWTLSVLISFIPVQLSW). The Extracellular portion of the chain corresponds to 163–192 (HKAKPTWPLDGNFTSLEDAEDDNCDTRLSR). A helical transmembrane segment spans residues 193-218 (TYAISSSLISFYIPVAIMIVTYTSIY). At 219-272 (RIAQKQIRRISALERAAVHAKNCQTTTGNGNPVECSQSESSFKMSFKRETKVLK) the chain is on the cytoplasmic side. The helical transmembrane segment at 273–299 (TLSVIMGVFVCCWLPFFISNCMVPFCG) threads the bilayer. At 300–312 (SEETQPFCIDSIT) the chain is on the extracellular side. The chain crosses the membrane as a helical span at residues 313-337 (FDVFVWFGWANSSLNPIIYAFNADF). Topologically, residues 338–446 (QKAFSTLLGC…PVTHSGQHST (109 aa)) are cytoplasmic. Residues cysteine 347 and cysteine 351 are each lipidated (S-palmitoyl cysteine). Serine 441 is modified (phosphoserine).

It belongs to the G-protein coupled receptor 1 family. In terms of assembly, interacts with DNAJC14 via its C-terminus. Interacts with DRD2. Interacts with DORIP1.

The protein resides in the cell membrane. It is found in the endoplasmic reticulum membrane. It localises to the cell projection. Its subcellular location is the cilium membrane. The protein localises to the dendrite. The protein resides in the dendritic spine. Dopamine receptor whose activity is mediated by G proteins which activate adenylyl cyclase. This chain is D(1A) dopamine receptor (Drd1), found in Mus musculus (Mouse).